The following is a 105-amino-acid chain: UPF0235 protein A1G_07140 (105 aa).

It belongs to the UPF0235 family.

In Rickettsia rickettsii (strain Sheila Smith), this protein is UPF0235 protein A1G_07140.